The chain runs to 501 residues: NAD(P)H-quinone oxidoreductase subunit 2, chloroplastic (501 aa).

Transmembrane regions (helical) follow at residues 15-35 (ILPE…DLTF), 40-60 (TIWL…ILLF), 82-102 (IFQS…IEYI), 107-127 (MAIP…MFLC), 132-152 (LVTI…LCGY), 167-187 (LLIG…LYGL), 212-232 (TFIA…LVPF), 244-264 (PTPV…ALAT), 278-298 (WKIF…LVAI), 307-327 (LAYS…TGDL), 333-353 (MTIY…CIIL), 378-398 (FSLT…GFFG), 410-430 (GFYL…YYYL), and 466-486 (FVMI…NPIF).

The protein belongs to the complex I subunit 2 family. NDH is composed of at least 16 different subunits, 5 of which are encoded in the nucleus.

It is found in the plastid. It localises to the chloroplast thylakoid membrane. It catalyses the reaction a plastoquinone + NADH + (n+1) H(+)(in) = a plastoquinol + NAD(+) + n H(+)(out). It carries out the reaction a plastoquinone + NADPH + (n+1) H(+)(in) = a plastoquinol + NADP(+) + n H(+)(out). Its function is as follows. NDH shuttles electrons from NAD(P)H:plastoquinone, via FMN and iron-sulfur (Fe-S) centers, to quinones in the photosynthetic chain and possibly in a chloroplast respiratory chain. The immediate electron acceptor for the enzyme in this species is believed to be plastoquinone. Couples the redox reaction to proton translocation, and thus conserves the redox energy in a proton gradient. This chain is NAD(P)H-quinone oxidoreductase subunit 2, chloroplastic, found in Marchantia polymorpha (Common liverwort).